Consider the following 344-residue polypeptide: MVTERQQDILNLIIDIFTKTHEPVGSKALQESINSSSATIRNDMAELEKQGLLEKAHTSSGRMPSVAGFQYYVKHSLDFHRLAENEVYEIVKAFDQEFFKLEDILQEAANLLTDLSGCTVVALDVEPSRQRLTAFDIVVLGQHTALAVFTLDESRTVTSQFLIPRNFLQEDLLKLKSIIQERFLGHTVLDIHYKIRTEIPQIIQRYFTTTDNVIDLFEHIFKEMFNENIVMAGKVNLLNFANLAAYQFFDQPQKVALEIREGLREDQMQNVRIADGQESCLADLAVISSKFLIPYRGVGILAIIGPVNLDYQQLINQINVVNRVLTMKLTDFYRYLSSNHYEVH.

It belongs to the HrcA family.

Negative regulator of class I heat shock genes (grpE-dnaK-dnaJ and groELS operons). Prevents heat-shock induction of these operons. The polypeptide is Heat-inducible transcription repressor HrcA (Streptococcus pneumoniae (strain P1031)).